Consider the following 263-residue polypeptide: MRFSSWALVSLVAGVYMSSECFHTEIIGGREVQPHSRPFMASIQYRSKHICGGVLIHPQWVLTAAHCYSWFPRGHSPTVVLGAHSLSKNEPMKQTFEIKKFIPFSRLQSGSASHDIMLIKLRTAAELNKNVQLLHLGSKNYLRDGTKCQVTGWGTTKPDLLTASDTLREVTVTIISRKRCNSQSYYNHKPVITKDMICAGDARGQKDSCKGDSGGPLICKGIFHALVSQGYKCGIAKKPGIYTLLTKKYQTWIKSKLAPSRAH.

The first 21 residues, 1–21 (MRFSSWALVSLVAGVYMSSEC), serve as a signal peptide directing secretion. Positions 22–25 (FHTE) are cleaved as a propeptide — activation peptide. A Peptidase S1 domain is found at 26-258 (IIGGREVQPH…YQTWIKSKLA (233 aa)). An intrachain disulfide couples Cys51 to Cys67. Residues His66 and Asp115 each act as charge relay system in the active site. 3 disulfides stabilise this stretch: Cys148/Cys219, Cys180/Cys198, and Cys209/Cys233. The active-site Charge relay system is the Ser213.

This sequence belongs to the peptidase S1 family. Granzyme subfamily.

Its subcellular location is the cytoplasmic granule. The chain is Granzyme K (Gzmk) from Mus musculus (Mouse).